Reading from the N-terminus, the 481-residue chain is UDP-N-acetylmuramate--L-alanine ligase (481 aa).

Position 122-128 (G122–T128) interacts with ATP.

It belongs to the MurCDEF family.

The protein resides in the cytoplasm. The enzyme catalyses UDP-N-acetyl-alpha-D-muramate + L-alanine + ATP = UDP-N-acetyl-alpha-D-muramoyl-L-alanine + ADP + phosphate + H(+). It functions in the pathway cell wall biogenesis; peptidoglycan biosynthesis. Functionally, cell wall formation. This is UDP-N-acetylmuramate--L-alanine ligase from Treponema pallidum (strain Nichols).